Here is a 193-residue protein sequence, read N- to C-terminus: Probable GTP-binding protein EngB (193 aa).

Residues 22-193 enclose the EngB-type G domain; that stretch reads LLPEVALAGR…AAWEAIYRHL (172 aa). GTP-binding positions include 30 to 37, 57 to 61, 75 to 78, 142 to 145, and 174 to 176; these read GRSNVGKS, GKTQT, DVPG, TKLD, and FSS. Residues Ser37 and Thr59 each contribute to the Mg(2+) site.

The protein belongs to the TRAFAC class TrmE-Era-EngA-EngB-Septin-like GTPase superfamily. EngB GTPase family. Mg(2+) serves as cofactor.

In terms of biological role, necessary for normal cell division and for the maintenance of normal septation. This chain is Probable GTP-binding protein EngB, found in Exiguobacterium sibiricum (strain DSM 17290 / CCUG 55495 / CIP 109462 / JCM 13490 / 255-15).